The chain runs to 672 residues: Spermatid perinuclear RNA-binding protein (672 aa).

The region spanning 5–363 (RSFANDDRHV…ALKRPFEDGL (359 aa)) is the DZF domain. Disordered stretches follow at residues 52-73 (TNKG…GENY) and 349-371 (GAGS…DPNK). The segment covering 357–371 (RPFEDGLGDDKDPNK) has biased composition (basic and acidic residues). The DRBM 1 domain occupies 387–453 (DLMNALMRLN…AVKVLQAMGY (67 aa)). Over residues 466–476 (SDEKSDNESKN) the composition is skewed to basic and acidic residues. Residues 466–499 (SDEKSDNESKNETVSSNSSNNTGNSTTETSSTLE) form a disordered region. Low complexity predominate over residues 477-497 (ETVSSNSSNNTGNSTTETSST). One can recognise a DRBM 2 domain in the interval 510–576 (SGKNPVMELN…ALAALEKLFS (67 aa)). An asymmetric dimethylarginine mark is found at R612 and R617.

As to quaternary structure, interacts with EIF2AK2. Associates with microtubules; it is unsure whether such interaction is direct or indirect.

It is found in the cytoplasm. Involved in spermatogenesis and sperm function. Plays a role in regulation of cell growth. Binds to double-stranded DNA and RNA. Binds most efficiently to poly(I:C) RNA than to poly(dI:dC) DNA. Binds also to single-stranded poly(G) RNA. Binds non-specifically to the mRNA PRM1 3'-UTR and adenovirus VA RNA. This is Spermatid perinuclear RNA-binding protein (STRBP) from Homo sapiens (Human).